A 91-amino-acid polypeptide reads, in one-letter code: Beta-microseminoprotein (91 aa).

Disulfide bonds link cysteine 2-cysteine 54, cysteine 22-cysteine 46, cysteine 41-cysteine 75, cysteine 44-cysteine 53, and cysteine 68-cysteine 88.

In terms of tissue distribution, expressed in ciliated epithelium of nidamental gland and in secretory-like cells in accessory nidamental gland (at protein level). Expressed in ovary, nidamental gland and accessory nidamental gland.

The protein resides in the secreted. Its function is as follows. Acts as a pheromone. Triggers aggressive behaviors in males such as fin beating, lunging and grabbing. These behaviors form part of the competition for fertile females. The chain is Beta-microseminoprotein from Doryteuthis pealeii (Longfin inshore squid).